Reading from the N-terminus, the 257-residue chain is Alcohol dehydrogenase 1 (257 aa).

V9–L33 contacts NAD(+). A substrate-binding site is contributed by S137. The active-site Proton acceptor is Y150.

This sequence belongs to the short-chain dehydrogenases/reductases (SDR) family. As to quaternary structure, homodimer.

It catalyses the reaction a primary alcohol + NAD(+) = an aldehyde + NADH + H(+). The enzyme catalyses a secondary alcohol + NAD(+) = a ketone + NADH + H(+). This is Alcohol dehydrogenase 1 (ADH1) from Ceratitis capitata (Mediterranean fruit fly).